The sequence spans 136 residues: Heavy metal-associated isoprenylated plant protein 19 (136 aa).

An HMA domain is found at 13-77 (YMDVEFNVSM…LKKKTGKRVK (65 aa)). C24 and C27 together coordinate a metal cation. C133 is subject to Cysteine methyl ester. C133 carries the S-farnesyl cysteine lipid modification. Positions 134–136 (SIS) are cleaved as a propeptide — removed in mature form.

This sequence belongs to the HIPP family.

Functionally, heavy-metal-binding protein. In Arabidopsis thaliana (Mouse-ear cress), this protein is Heavy metal-associated isoprenylated plant protein 19.